The primary structure comprises 434 residues: MLLWTAVLLFVPCVGKTVWLYLQAWPNPVFEGDALTLRCQGWKNTPLSQVKFYRDGKFLHFSKENQTLSMGAATVQSRGQYSCSGQVMYIPQTFTQTSETAMVQVQELFPPPVLSAIPSPEPREGSLVTLRCQTKLHPLRSALRLLFSFHKDGHTLQDRGPHPELCIPGAKEGDSGLYWCEVAPEGGQVQKQSPQLEVRVQAPVSRPVLTLHHGPADPAVGDMVQLLCEAQRGSPPILYSFYLDEKIVGNHSAPCGGTTSLLFPVKSEQDAGNYSCEAENSVSRERSEPKKLSLKGSQVLFTPASNWLVPWLPASLLGLMVIAAALLVYVRSWRKAGPLPSQIPPTAPGGEQCPLYANVHHQKGKDEGVVYSVVHRTSKRSEARSAEFTVGRKDSSIICAEVRCLQPSEVSSTEVNMRSRTLQEPLSDCEEVLC.

An N-terminal signal peptide occupies residues 1–19 (MLLWTAVLLFVPCVGKTVW). Ig-like C2-type domains are found at residues 20–95 (LYLQ…QTFT), 111–197 (PPVL…PQLE), and 207–293 (PVLT…KKLS). Over 20–307 (LYLQAWPNPV…QVLFTPASNW (288 aa)) the chain is Extracellular. 3 disulfide bridges follow: cysteine 39–cysteine 83, cysteine 132–cysteine 180, and cysteine 228–cysteine 276. A glycan (N-linked (GlcNAc...) asparagine) is linked at asparagine 65. The N-linked (GlcNAc...) asparagine glycan is linked to asparagine 273. A helical transmembrane segment spans residues 308 to 328 (LVPWLPASLLGLMVIAAALLV). Residues 329-434 (YVRSWRKAGP…PLSDCEEVLC (106 aa)) lie on the Cytoplasmic side of the membrane. Positions 369 to 374 (VVYSVV) match the ITIM motif motif. The residue at position 371 (tyrosine 371) is a Phosphotyrosine.

In terms of assembly, interacts (tyrosine phosphorylated) with PTPN11. Interacts (tyrosine phosphorylated) with PTPN6, INPP5D, INPPL1 and GRB2. Interacts with class II MHC HLA-DR when the alpha chain is associated with a beta-1, beta-4 or a beta-5 but not a beta-3 chain. In terms of processing, phosphorylated on Tyr residues. Tyrosine phosphorylation induces association with phosphatase PTPN11, PTPN6, INPP5D, INPPL1 and GRB2. In terms of tissue distribution, expressed by cytolytic cells including NK cells, effector and effector-memory CD8(+) T-cells, and a subset of NKT cells (at protein level). Also expressed in gamma delta T cells and in a rare subset of effector CD4(+) T-cells (at protein level). Expressed in spleen, skin, peripheral blood leukocytes, liver, lung, bone marrow, small intestine and placenta. Expression among T-cells is greatly expanded in HIV-1 infected individuals, and includes not only effector and effector-memory CD8(+) T-cells but also populations of CD4(+) T-cells. Expression among CD8(+) T-cells and NK cells is expanded in individuals with chronic lymphocytic leukemia (CLL) but is reduced in PBMCs from patients with acute (AML), chronic myeloid leukemia (CML) and non-Hodgkin's lymphoma. Expression is higher in PBMCs and/or CD3(+) cells of patients with autoimmune diseases, such as rheumatoid arthritis (RA), systemic lupus erythematosus (SLE) and idiopathic thrombocytopenia purpura (ITP). In contrast, expression in CD3(+) cells from patients with lupus anticoagulans (LA) is higher.

The protein localises to the cell membrane. Functionally, acts as a MHC class II receptor. When stimulated on its own, does not play a role in cytokine production or the release of cytotoxic granules by NK cells and cytotoxic CD8(+) T cells. Does not act as an Fc receptor. The sequence is that of Fc receptor-like protein 6 (FCRL6) from Homo sapiens (Human).